The primary structure comprises 341 residues: Phosphoribosylformylglycinamidine cyclo-ligase (341 aa).

It belongs to the AIR synthase family.

The protein localises to the cytoplasm. It catalyses the reaction 2-formamido-N(1)-(5-O-phospho-beta-D-ribosyl)acetamidine + ATP = 5-amino-1-(5-phospho-beta-D-ribosyl)imidazole + ADP + phosphate + H(+). Its pathway is purine metabolism; IMP biosynthesis via de novo pathway; 5-amino-1-(5-phospho-D-ribosyl)imidazole from N(2)-formyl-N(1)-(5-phospho-D-ribosyl)glycinamide: step 2/2. This Xanthomonas euvesicatoria pv. vesicatoria (strain 85-10) (Xanthomonas campestris pv. vesicatoria) protein is Phosphoribosylformylglycinamidine cyclo-ligase.